The primary structure comprises 292 residues: MPWLQVRLAISPEQAETYEDALLEVGAVSVTFMDAEDQPIFEPDLNTTPLWSHTHLLALFEADADPEQVFAHLRLLTGAELPEHQAEVIEDQDWERSWMDNFQPMRFGRRLWIVPSWHEAPEKDAVNLLLDPGLAFGTGTHPTTALCLEWLDGQQLDGTQVLDFGCGSGILAIAALLLGAREAVGTDIDVQAIEASRDNAQRNGVADEKLALYLPEHMPAMQADVLVANILAGPLVSLAPQLSGLVRPGGLLALSGILAEQGEEVAAAYAADFDLDPIVVRDGWVRISGRRR.

The S-adenosyl-L-methionine site is built by Thr144, Gly165, Asp187, and Asn229.

It belongs to the methyltransferase superfamily. PrmA family.

The protein resides in the cytoplasm. The enzyme catalyses L-lysyl-[protein] + 3 S-adenosyl-L-methionine = N(6),N(6),N(6)-trimethyl-L-lysyl-[protein] + 3 S-adenosyl-L-homocysteine + 3 H(+). In terms of biological role, methylates ribosomal protein L11. The sequence is that of Ribosomal protein L11 methyltransferase from Pseudomonas putida (strain GB-1).